The primary structure comprises 259 residues: Chloroplastic import inner membrane translocase subunit HP30-2 (259 aa).

Helical transmembrane passes span 55-75 (AVVT…MGTL), 108-124 (NFAA…CVMK), 135-155 (AVVA…GLQG), and 158-178 (MNAI…FKLG).

This sequence belongs to the Tim17/Tim22/Tim23 family. Probable component of a protein-conducting channel made of HP30-1, HP30-2 and HP20 that mediates the import of transit sequence-less proteins into the chloroplastic inner membrane. Interacts with CEQORH.

Its subcellular location is the mitochondrion membrane. The protein localises to the plastid. It is found in the chloroplast inner membrane. Functionally, together with HP30-1 and HP20, triggers the import and insertion of transit sequence-less multi-pass transmembrane proteins (e.g. CEQORH) into the chloroplastic inner membrane. This is Chloroplastic import inner membrane translocase subunit HP30-2 from Arabidopsis thaliana (Mouse-ear cress).